The chain runs to 872 residues: Metabotropic glutamate receptor 2 (872 aa).

The N-terminal stretch at 1–18 (MESLLGFLALLLLWGAVA) is a signal peptide. Residues 19–567 (EGPAKKVLTL…QEYIRWGDAW (549 aa)) are Extracellular-facing. A disulfide bridge links cysteine 50 with cysteine 92. The L-glutamate site is built by arginine 57, arginine 61, serine 145, alanine 166, and threonine 168. N-linked (GlcNAc...) asparagine glycosylation is found at asparagine 203 and asparagine 286. Disulfide bonds link cysteine 234-cysteine 518, cysteine 355-cysteine 362, cysteine 400-cysteine 407, cysteine 500-cysteine 519, cysteine 504-cysteine 522, cysteine 525-cysteine 537, and cysteine 540-cysteine 553. Aspartate 295 serves as a coordination point for L-glutamate. Residue asparagine 338 is glycosylated (N-linked (GlcNAc...) asparagine). Lysine 377 contacts L-glutamate. N-linked (GlcNAc...) asparagine glycosylation is present at asparagine 402. Asparagine 547 carries an N-linked (GlcNAc...) asparagine glycan. Residues 568-590 (AVGPVTIACLGALATLFVLGVFV) traverse the membrane as a helical segment. Residues 591–604 (RHNATPVVKASGRE) are Cytoplasmic-facing. A helical membrane pass occupies residues 605-625 (LCYILLGGVFLCYCMTFVFIA). Topologically, residues 626 to 636 (KPSTAVCTLRR) are extracellular. Cysteine 632 and cysteine 721 form a disulfide bridge. A helical membrane pass occupies residues 637-655 (LGLGTAFSVCYSALLTKTN). Residues 656–679 (RIARIFGGAREGAQRPRFISPASQ) are Cytoplasmic-facing. An important for interaction with HTR2A region spans residues 677 to 685 (ASQVAICLA). A helical transmembrane segment spans residues 680-700 (VAICLALISGQLLIVAAWLVV). Topologically, residues 701 to 725 (EAPGTGKETAPERREVVTLRCNHRD) are extracellular. A helical transmembrane segment spans residues 726–747 (ASMLGSLAYNVLLIALCTLYAF). The Cytoplasmic portion of the chain corresponds to 748–760 (KTRKCPENFNEAK). The chain crosses the membrane as a helical span at residues 761–783 (FIGFTMYTTCIIWLAFLPIFYVT). Residues 784–793 (SSDYRVQTTT) lie on the Extracellular side of the membrane. Residues 794 to 819 (MCVSVSLSGSVVLGCLFAPKLHIILF) traverse the membrane as a helical segment. The Cytoplasmic segment spans residues 820 to 872 (QPQKNVVSHRAPTSRFGSAAPRASANLGQGSGSQFVPTVCNGREVVDSTTSSL).

Belongs to the G-protein coupled receptor 3 family. Forms heterodimers with GRM3 or GRM4. Interacts with GNAI1. Interacts with TAMALIN. Interacts with HTR2A. Is widely distributed in the CNS and prominent expression is seen in Golgi cells of the cerebellum and some particular neuronal cells in other brain regions.

The protein resides in the cell membrane. It is found in the synapse. Its subcellular location is the cell projection. The protein localises to the dendrite. Functionally, dimeric G protein-coupled receptor which is activated by the excitatory neurotransmitter L-glutamate. Plays critical roles in modulating synaptic transmission and neuronal excitability. Upon activation by glutamate, inhibits presynaptic calcium channels, reducing further glutamate release and dampening excitatory signaling. Mechanistically, ligand binding causes a conformation change that triggers signaling via guanine nucleotide-binding proteins (G proteins) and modulates the activity of down-stream effectors, such as adenylate cyclase. May mediate suppression of neurotransmission or may be involved in synaptogenesis or synaptic stabilization. In Rattus norvegicus (Rat), this protein is Metabotropic glutamate receptor 2 (Grm2).